The primary structure comprises 185 residues: Protein OPG161 (185 aa).

Topologically, residues 1-33 (MMTPENDEEQTSVFSATVYGDKIQGKNKRKRVI) are intravirion. The helical transmembrane segment at 34–56 (GLCIRISMVISLLSMITMSAFLI) threads the bilayer. Residues 57–185 (VRLNQCMSAN…RKYFCVKTMN (129 aa)) are Virion surface-facing. The C-type lectin-like domain stretch occupies residues 98–185 (ESCNGLYYQG…RKYFCVKTMN (88 aa)). N-linked (GlcNAc...) asparagine; by host glycosylation is found at Asn-125 and Asn-135.

It belongs to the orthopoxvirus OPG161 family. Homodimer, disulfide-linked. Interacts with protein OPG190. Interacts (via C-terminus) with protein OPG164. Interacts with OPG162.

It is found in the virion membrane. The protein resides in the host membrane. In terms of biological role, forms a complex with OPG162 and OPG190 to coordinate the incorporation of OPG164 into wrapped enveloped virion (EV) membranes and, subsequently, the production of actin tails. Therefore plays an essential role in efficient cell-to-cell spread of viral particles. In Homo sapiens (Human), this protein is Protein OPG161 (OPG161).